Here is an 87-residue protein sequence, read N- to C-terminus: Small ribosomal subunit protein bS20 (87 aa).

Belongs to the bacterial ribosomal protein bS20 family.

In terms of biological role, binds directly to 16S ribosomal RNA. The chain is Small ribosomal subunit protein bS20 from Clostridium perfringens (strain 13 / Type A).